Here is a 147-residue protein sequence, read N- to C-terminus: D-aminoacyl-tRNA deacylase (147 aa).

The Gly-cisPro motif, important for rejection of L-amino acids signature appears at 136–137; it reads GP.

It belongs to the DTD family. As to quaternary structure, homodimer.

The protein localises to the cytoplasm. The enzyme catalyses glycyl-tRNA(Ala) + H2O = tRNA(Ala) + glycine + H(+). The catalysed reaction is a D-aminoacyl-tRNA + H2O = a tRNA + a D-alpha-amino acid + H(+). In terms of biological role, an aminoacyl-tRNA editing enzyme that deacylates mischarged D-aminoacyl-tRNAs. Also deacylates mischarged glycyl-tRNA(Ala), protecting cells against glycine mischarging by AlaRS. Acts via tRNA-based rather than protein-based catalysis; rejects L-amino acids rather than detecting D-amino acids in the active site. By recycling D-aminoacyl-tRNA to D-amino acids and free tRNA molecules, this enzyme counteracts the toxicity associated with the formation of D-aminoacyl-tRNA entities in vivo and helps enforce protein L-homochirality. This chain is D-aminoacyl-tRNA deacylase, found in Streptococcus pneumoniae (strain Taiwan19F-14).